The sequence spans 399 residues: Probable sugar efflux transporter (399 aa).

A run of 12 helical transmembrane segments spans residues 15-35, 50-70, 81-101, 103-123, 136-156, 168-188, 209-229, 246-266, 273-293, 301-321, 333-353, and 364-384; these read VVTL…PVGL, VGMM…PFML, LIGL…AWNF, VLVI…SITS, AQAL…GIPI, MTFL…VKLL, PALV…YTAY, FATV…ILFG, ASGL…LLLP, LMLL…GMQV, VAMS…ALVG, and SVGY…LMIF.

It belongs to the major facilitator superfamily. SotB (TC 2.A.1.2) family.

It localises to the cell inner membrane. Its function is as follows. Involved in the efflux of sugars. The physiological role may be the reduction of the intracellular concentration of toxic sugars or sugar metabolites. This chain is Probable sugar efflux transporter, found in Klebsiella pneumoniae subsp. pneumoniae (strain ATCC 700721 / MGH 78578).